Reading from the N-terminus, the 282-residue chain is Transcription factor HES-1 (282 aa).

A disordered region spans residues 1-44 (MPADIMEKNSSSPVAATPASVNTTPDKPKTASEHRKSSKPIMEK). The span at 10–21 (SSSPVAATPASV) shows a compositional bias: low complexity. Residues 26–35 (DKPKTASEHR) show a composition bias toward basic and acidic residues. Positions 34–91 (HRKSSKPIMEKRRRARINESLSQLKTLILDALKKDSSRHSKLEKADILEMTVKHLRNL) constitute a bHLH domain. Positions 110–143 (YRAGFSECMNEVTRFLSTCEGVNTEVRTRLLGHL) constitute an Orange domain. Disordered regions lie at residues 158-204 (QAHP…GSAP) and 256-282 (TSVG…PWRN). 2 stretches are compositionally biased toward pro residues: residues 164–174 (QAPPPPPPSGP) and 182–202 (FAPP…PPGS). Residues 264-275 (SPSSGSSLTSDS) are compositionally biased toward low complexity. The short motif at 277-280 (WRPW) is the WRPW motif element.

Interacts with SIRT1. Transcription repression requires formation of a complex with a corepressor protein of the Groucho/TLE family. Interacts (via WPRW motif) with TLE1, and more weakly with TLE2. Interacts with HES6. Interacts with an FA complex, composed of FANCA, FANCF, FANCG and FANCL, but not of FANCC, nor FANCE. Expressed at high levels in undifferentiated neural precursor cells, but the level of expression decreases as neural differentiation proceeds.

It is found in the nucleus. Functionally, transcriptional repressor of genes that require a bHLH protein for their transcription. May act as a negative regulator of myogenesis by inhibiting the functions of MYOD1 and ASH1. Binds DNA on N-box motifs: 5'-CACNAG-3' with high affinity and on E-box motifs: 5'-CANNTG-3' with low affinity. May play a role in a functional FA core complex response to DNA cross-link damage, being required for the stability and nuclear localization of FA core complex proteins, as well as for FANCD2 monoubiquitination in response to DNA damage. The polypeptide is Transcription factor HES-1 (Hes1) (Mus musculus (Mouse)).